The sequence spans 428 residues: Glutamate-1-semialdehyde 2,1-aminomutase 1 (428 aa).

Residue Lys-268 is modified to N6-(pyridoxal phosphate)lysine.

This sequence belongs to the class-III pyridoxal-phosphate-dependent aminotransferase family. HemL subfamily. In terms of assembly, homodimer. Pyridoxal 5'-phosphate serves as cofactor.

It localises to the cytoplasm. It carries out the reaction (S)-4-amino-5-oxopentanoate = 5-aminolevulinate. It participates in porphyrin-containing compound metabolism; protoporphyrin-IX biosynthesis; 5-aminolevulinate from L-glutamyl-tRNA(Glu): step 2/2. The protein is Glutamate-1-semialdehyde 2,1-aminomutase 1 of Geobacillus thermodenitrificans (strain NG80-2).